A 166-amino-acid chain; its full sequence is Large ribosomal subunit protein mL49 (166 aa).

A disordered region spans residues 54–77; the sequence is PTKIPEPPKHKHYPTPSGWQPPRD.

The protein belongs to the mitochondrion-specific ribosomal protein mL49 family. As to quaternary structure, component of the mitochondrial ribosome large subunit (39S) which comprises a 16S rRNA and about 50 distinct proteins. Interacts with OXA1L.

The protein resides in the mitochondrion. The chain is Large ribosomal subunit protein mL49 (Mrpl49) from Mus musculus (Mouse).